Here is a 528-residue protein sequence, read N- to C-terminus: UDP-glucuronosyltransferase 2A2 (528 aa).

Residues 1 to 21 form the signal peptide; the sequence is MIKKVLQLLIFHLTLAEIVLS. At 22–494 the chain is on the extracellular side; it reads GNVVVWPTDG…FQYHSLDVIG (473 aa). N-linked (GlcNAc...) asparagine glycans are attached at residues Asn48 and Asn314. Residues 495-515 traverse the membrane as a helical segment; the sequence is FLLACVASAILLVAKCCLFIF. The Cytoplasmic segment spans residues 516–528; it reads QKVGKTGKKKKRD.

This sequence belongs to the UDP-glycosyltransferase family.

Its subcellular location is the membrane. The catalysed reaction is glucuronate acceptor + UDP-alpha-D-glucuronate = acceptor beta-D-glucuronoside + UDP + H(+). It carries out the reaction 17alpha-estradiol + UDP-alpha-D-glucuronate = 17alpha-estradiol 3-O-(beta-D-glucuronate) + UDP + H(+). It catalyses the reaction 17beta-estradiol + UDP-alpha-D-glucuronate = 17beta-estradiol 3-O-(beta-D-glucuronate) + UDP + H(+). The enzyme catalyses chenodeoxycholate + UDP-alpha-D-glucuronate = chenodeoxycholoyl-24-O-(beta-D-glucuronate) + UDP. The catalysed reaction is lithocholate + UDP-alpha-D-glucuronate = lithocholoyl-24-O-(beta-D-glucuronate) + UDP. It carries out the reaction deoxycholate + UDP-alpha-D-glucuronate = deoxycholoyl-24-O-(beta-D-glucuronate) + UDP. It catalyses the reaction hyocholate + UDP-alpha-D-glucuronate = hyocholoyl-24-O-(beta-D-glucuronate) + UDP. The enzyme catalyses hyodeoxycholate + UDP-alpha-D-glucuronate = hyodeoxycholate 6-O-(beta-D-glucuronate) + UDP + H(+). Its function is as follows. UDP-glucuronosyltransferase (UGT) that catalyzes phase II biotransformation reactions in which lipophilic substrates are conjugated with glucuronic acid to increase the metabolite's water solubility, thereby facilitating excretion into either the urine or bile. Essential for the elimination and detoxification of drugs, xenobiotics and endogenous compounds. Catalyzes the glucuronidation of endogenous estrogen hormone estradiol. Contributes to bile acid (BA) detoxification by catalyzing the glucuronidation of BA substrates, which are natural detergents for dietary lipids absorption. Potential role in detoxification of toxic waste compounds in the amniotic fluid before birth, and air-born chemical after birth. The polypeptide is UDP-glucuronosyltransferase 2A2 (Mus musculus (Mouse)).